The chain runs to 92 residues: Small ribosomal subunit protein bS20 (92 aa).

The disordered stretch occupies residues 1–28 (MANTASAEKRNRQAQKRRARNVQVRTGV).

This sequence belongs to the bacterial ribosomal protein bS20 family.

Functionally, binds directly to 16S ribosomal RNA. The protein is Small ribosomal subunit protein bS20 of Anaeromyxobacter dehalogenans (strain 2CP-C).